Consider the following 907-residue polypeptide: NADH-quinone oxidoreductase subunit G (907 aa).

Residues 1 to 83 (MTIIFVDNEE…GMIVSTSDKI (83 aa)) enclose the 2Fe-2S ferredoxin-type domain. Residues Cys-34, Cys-45, Cys-48, and Cys-67 each coordinate [2Fe-2S] cluster. The 4Fe-4S His(Cys)3-ligated-type domain maps to 83-122 (ISRNFRKGIIELLMLNHPHDCPICEEGGSCHLQDMTVMAG). 12 residues coordinate [4Fe-4S] cluster: His-99, Cys-103, Cys-106, Cys-112, Cys-151, Cys-154, Cys-157, Cys-201, Cys-228, Cys-231, Cys-235, and Cys-263. Positions 221 to 277 (MQYAPSICQHCCVGCNISVGEKYGKISRIENRYHNAINHYFLCDLGRFSYDYSNVDE) constitute a 4Fe-4S Mo/W bis-MGD-type domain.

This sequence belongs to the complex I 75 kDa subunit family. Composed of 13 different subunits. Subunits NuoCD, E, F, and G constitute the peripheral sector of the complex. [2Fe-2S] cluster serves as cofactor. Requires [4Fe-4S] cluster as cofactor.

The catalysed reaction is a quinone + NADH + 5 H(+)(in) = a quinol + NAD(+) + 4 H(+)(out). Functionally, NDH-1 shuttles electrons from NADH, via FMN and iron-sulfur (Fe-S) centers, to quinones in the respiratory chain. Couples the redox reaction to proton translocation (for every two electrons transferred, four hydrogen ions are translocated across the cytoplasmic membrane), and thus conserves the redox energy in a proton gradient. This Buchnera aphidicola subsp. Baizongia pistaciae (strain Bp) protein is NADH-quinone oxidoreductase subunit G (nuoG).